Consider the following 316-residue polypeptide: Protein FLUORESCENT IN BLUE LIGHT, chloroplastic (316 aa).

The transit peptide at 1-26 (MAALIRCCSSFSHTSGGQPPPRDKSR) directs the protein to the chloroplast. Residues 125–145 (MFSMPILLLVALIGATVGGLL) traverse the membrane as a helical segment. Residues 144-175 (LLARQRKGELQRLNEQLRQINAALRRQAKIES) are a coiled coil. 3 TPR repeats span residues 203–236 (LISKLKTGKTFLRNQEPEKAYTEFKIALELAQSL), 243–276 (KKAARGLGASLQRQGKYREAIQYHSMVLAISKRE), and 283–316 (TEAYGAIADCYTELGDLEKAGKFYDTYIARLETD).

As to quaternary structure, part of the FLU-containing chloroplast membrane complex composed of FLU, CRD1, PORB, PORC, CHLP and HEMA1. Interacts with HEMA1 (via C-terminus) only in the absence of light. No interaction with HEMA2.

Its subcellular location is the plastid. The protein resides in the chloroplast membrane. It is found in the chloroplast thylakoid membrane. Its function is as follows. Negative regulator of tetrapyrrole biosynthesis (including chlorophyll) in chloroplasts, probably via HEMA1 repression. Inhibits especially the magnesium ion Mg(2+) branch of tetrapyrrole biosynthesis, but independently of heme. The chain is Protein FLUORESCENT IN BLUE LIGHT, chloroplastic (FLU) from Arabidopsis thaliana (Mouse-ear cress).